The chain runs to 436 residues: MKKLIPILEKIPEVELPVKEITFKEKLKWTGIVLVLYFIMGCIDVYTAGAQIPAIFEFWQTITASRIGTLITLGIGPIVTAGIIMQLLVGSGIIQMDLSIPENRALFQGCQKLLSIIMCFVEAVLFVGAGAFGILTPLLAFLVIIQIAFGSIILIYLDEIVSKYGIGSGIGLFIAAGVSQTIFVGALGPEGYLWKFLNSLIQGVPNIEYIAPIIGTIIVFLMVVYAECMRVEIPLAHGRIKGAVGKYPIKFVYVSNIPVILAAALFANIQLWGLALYRMGIPILGHYEGGRAVDGIAYYLSTPYGLSSVISDPIHAIVYMIAMIITCVMFGIFWVETTGLDPKSMAKRIGSLGMAIKGFRKSEKAIEHRLKRYIPPLTVMSSAFVGFLATIANFIGALGGGTGVLLTVSIVYRMYEQLLREKVSELHPAIAKLLNK.

Residues 1 to 28 (MKKLIPILEKIPEVELPVKEITFKEKLK) lie on the Cytoplasmic side of the membrane. A helical transmembrane segment spans residues 29 to 46 (WTGIVLVLYFIMGCIDVY). The Extracellular segment spans residues 47 to 55 (TAGAQIPAI). The segment at residues 56–63 (FEFWQTIT) is an intramembrane region (helical). Residues 56 to 88 (FEFWQTITASRIGTLITLGIGPIVTAGIIMQLL) traverse the membrane as a discontinuously helical segment. Residues 64–69 (ASRIGT) lie within the membrane without spanning it. The helical intramembrane region spans 70–88 (LITLGIGPIVTAGIIMQLL). The Cytoplasmic segment spans residues 89–110 (VGSGIIQMDLSIPENRALFQGC). Residues 111–129 (QKLLSIIMCFVEAVLFVGA) form a helical membrane-spanning segment. The Extracellular segment spans residues 130 to 140 (GAFGILTPLLA). A helical membrane pass occupies residues 141–161 (FLVIIQIAFGSIILIYLDEIV). Topologically, residues 162 to 168 (SKYGIGS) are cytoplasmic. A helical membrane pass occupies residues 169-191 (GIGLFIAAGVSQTIFVGALGPEG). At 192 to 209 (YLWKFLNSLIQGVPNIEY) the chain is on the extracellular side. The helical transmembrane segment at 210 to 227 (IAPIIGTIIVFLMVVYAE) threads the bilayer. Residues 228–255 (CMRVEIPLAHGRIKGAVGKYPIKFVYVS) are Cytoplasmic-facing. A helical membrane pass occupies residues 256–277 (NIPVILAAALFANIQLWGLALY). Residues 278-312 (RMGIPILGHYEGGRAVDGIAYYLSTPYGLSSVISD) lie on the Extracellular side of the membrane. A helical transmembrane segment spans residues 313–331 (PIHAIVYMIAMIITCVMFG). The Cytoplasmic segment spans residues 332 to 382 (IFWVETTGLDPKSMAKRIGSLGMAIKGFRKSEKAIEHRLKRYIPPLTVMSS). Residues 383-397 (AFVGFLATIANFIGA) traverse the membrane as a helical segment. L398 is a topological domain (extracellular). A helical transmembrane segment spans residues 399–412 (GGGTGVLLTVSIVY). Residues 413–436 (RMYEQLLREKVSELHPAIAKLLNK) lie on the Cytoplasmic side of the membrane.

It belongs to the SecY/SEC61-alpha family. As to quaternary structure, component of the Sec protein translocase complex. Heterotrimer consisting of alpha (SecY), beta (SecG) and gamma (SecE) subunits. The heterotrimers can form oligomers, although 1 heterotrimer is thought to be able to translocate proteins. Interacts with the ribosome. May interact with SecDF, and other proteins may be involved.

The protein localises to the cell membrane. In terms of biological role, the central subunit of the protein translocation channel SecYEG. Consists of two halves formed by TMs 1-5 and 6-10. These two domains form a lateral gate at the front which open onto the bilayer between TMs 2 and 7, and are clamped together by SecE at the back. The channel is closed by both a pore ring composed of hydrophobic SecY resides and a short helix (helix 2A) on the extracellular side of the membrane which forms a plug. The plug probably moves laterally to allow the channel to open. The ring and the pore may move independently. The sequence is that of Protein translocase subunit SecY (secY) from Methanocaldococcus jannaschii (strain ATCC 43067 / DSM 2661 / JAL-1 / JCM 10045 / NBRC 100440) (Methanococcus jannaschii).